A 626-amino-acid polypeptide reads, in one-letter code: Putative L-type lectin-domain containing receptor kinase V.8 (626 aa).

The signal sequence occupies residues 1 to 21 (MPSELKVLHIVLVLLYTLSSS). Positions 22-212 (TYNSNGNWTL…SIGAFHYMLS (191 aa)) are legume-lectin like. Topologically, residues 22–245 (TYNSNGNWTL…PKKSSDRTKK (224 aa)) are extracellular. N-linked (GlcNAc...) asparagine glycans are attached at residues N28, N59, N112, and N162. Residues 246–266 (ILAVCLTLAVFAVFVASGICF) traverse the membrane as a helical segment. Over 267–626 (VFYTRHKKVK…LTNSFLSHGR (360 aa)) the chain is Cytoplasmic. The region spanning 303–562 (FKEKQLLGKG…GLLCAHHTEL (260 aa)) is the Protein kinase domain. Residues 309–317 (LGKGGFGQV) and K332 contribute to the ATP site. D429 (proton acceptor) is an active-site residue.

It in the C-terminal section; belongs to the protein kinase superfamily. Ser/Thr protein kinase family. This sequence in the N-terminal section; belongs to the leguminous lectin family.

It localises to the cell membrane. It catalyses the reaction L-seryl-[protein] + ATP = O-phospho-L-seryl-[protein] + ADP + H(+). The catalysed reaction is L-threonyl-[protein] + ATP = O-phospho-L-threonyl-[protein] + ADP + H(+). The polypeptide is Putative L-type lectin-domain containing receptor kinase V.8 (LECRK58) (Arabidopsis thaliana (Mouse-ear cress)).